The primary structure comprises 926 residues: Staphylococcal nuclease domain-containing protein 1 (926 aa).

Residues 1–17 are compositionally biased toward low complexity; it reads MATAANTATAAGAAKDA. The segment at 1-24 is disordered; the sequence is MATAANTATAAGAAKDAPPAPTKS. TNase-like domains lie at 23–167, 195–333, 346–505, and 535–674; these read KSLS…KWSP, NPVK…QWQD, KDFS…LHAK, and LRTE…IWTN. Residues 749-807 enclose the Tudor domain; that stretch reads TPKRGDLVAAQFTLDNQWYRAKVERVQGSNATVLYIDYGNKETLPTNRLAALPPAFSSE. The segment at 760–788 is involved in dimethylarginine binding; that stretch reads FTLDNQWYRAKVERVQGSNATVLYIDYGN.

In terms of assembly, associates with the RNA-induced silencing complex (RISC). Interacts with the RISC components AGO2, Fmr1 and vig. Interacts with piwi. As to expression, expressed in adult ovaries and testis (at protein level).

The protein resides in the cytoplasm. Its subcellular location is the nucleus. It carries out the reaction Endonucleolytic cleavage to nucleoside 3'-phosphates and 3'-phosphooligonucleotide end-products.. Its function is as follows. Endonuclease which shows activity towards both DNA and RNA substrates. Has a role in translation regulation throught its association with the with the RNA-induced silencing complex (RISC). Plays a role in spermatogenesis probably by negatively regulating piwi expression in the germline. Together with piwi, might be involved in transposon repression in the germline. The polypeptide is Staphylococcal nuclease domain-containing protein 1 (Drosophila melanogaster (Fruit fly)).